The chain runs to 995 residues: Polynucleotide 5'-hydroxyl-kinase NOL9 (995 aa).

Disordered stretches follow at residues 18–173 (EQRE…SSMK) and 271–359 (IKVF…YEPP). 2 stretches are compositionally biased toward low complexity: residues 75–94 (TAGA…SSPS) and 110–129 (VNKS…KSAK). The span at 279–354 (EETDSDEDDI…DIFDTDDLDS (76 aa)) shows a compositional bias: acidic residues. 639–646 (GGKGVGKS) contacts ATP.

The protein belongs to the Clp1 family. NOL9/GRC3 subfamily.

It localises to the nucleus. The protein resides in the nucleolus. Polynucleotide 5'-kinase involved in rRNA processing. In Drosophila melanogaster (Fruit fly), this protein is Polynucleotide 5'-hydroxyl-kinase NOL9.